The sequence spans 765 residues: Kinesin-like protein KIN-14S (765 aa).

The Kinesin motor domain occupies 132–456 (NIRVFCRCRP…LNFASRVRGI (325 aa)). 215-222 (GQTGTGKT) contributes to the ATP binding site. Residues 469 to 534 (ELLKSKQMAE…ERKTRIKQES (66 aa)) are a coiled coil. Disordered stretches follow at residues 581–613 (MPQQQPSQGHSKRFSDTTFKENNNSNRRSSSMD) and 654–678 (LRPEPSSLSSMETPSRPPPSFRGDP). Low complexity predominate over residues 602 to 611 (NNNSNRRSSS).

Belongs to the TRAFAC class myosin-kinesin ATPase superfamily. Kinesin family. KIN-14 subfamily.

The sequence is that of Kinesin-like protein KIN-14S from Arabidopsis thaliana (Mouse-ear cress).